The chain runs to 235 residues: Zinc transporter ZIP9 (235 aa).

Residue N2 is glycosylated (N-linked (GlcNAc...) asparagine). The next 4 membrane-spanning stretches (helical) occupy residues 11-31, 75-95, 104-124, and 138-158; these read SCVPILVFPSYWASFSCCWWT, TTTLGLVVHAAADGVALGAAA, LIVFVAIMLHKAPAAFGLVSF, and HLLVFSLAAPVMSMVTYLGLS. N169 carries N-linked (GlcNAc...) asparagine glycosylation. A run of 2 helical transmembrane segments spans residues 172-192 and 214-234; these read GMAMLFSAGTFLYVATVHVLP and LEVAALVLGCLIPLILSVGHQ.

Belongs to the ZIP transporter (TC 2.A.5) family.

Its subcellular location is the golgi apparatus. The protein resides in the trans-Golgi network membrane. The protein localises to the cell membrane. It localises to the cytoplasm. It is found in the perinuclear region. Its subcellular location is the mitochondrion. The protein resides in the nucleus. It catalyses the reaction Zn(2+)(in) = Zn(2+)(out). Transports zinc ions across cell and organelle membranes into the cytoplasm and regulates intracellular zinc homeostasis. Participates in the zinc ions efflux out of the secretory compartments. Regulates intracellular zinc level, resulting in the enhancement of AKT1 and MAPK3/MAPK1 (Erk1/2) phosphorylation in response to the BCR activation. Also functions as a membrane androgen receptor that mediates, through a G protein, the non-classical androgen signaling pathway, characterized by the activation of MAPK3/MAPK1 (Erk1/2) and transcription factors CREB1 or ATF1. This pathway contributes to CLDN1 and CLDN5 expression and tight junction formation between adjacent Sertoli cells. Mediates androgen-induced vascular endothelial cell proliferation through activation of an inhibitory G protein leading to the AKT1 and MAPK3/MAPK1 (Erk1/2) activation which in turn modulate inhibition (phosphorylation) of GSK3B and CCND1 transcription. Moreover, has dual functions as a membrane-bound androgen receptor and as an androgen-dependent zinc transporter both of which are mediated through an inhibitory G protein (Gi) that mediates both MAP kinase and zinc signaling leading to the androgen-dependent apoptotic process. The chain is Zinc transporter ZIP9 from Macaca fascicularis (Crab-eating macaque).